The sequence spans 305 residues: MEIPADLNLRKDVPLGDFTTWKVGGAADFFAEPDSSDHLEALVHWGRGQQLPMRFIGAGSNLLISDEGLAGLVICSRRLQGSQLDPTTGIIEAQAGEPLPTLARRAAKAGLSGLEWSVGIPGTVGGAVVMNAGAQGGCIAESLIDATVLDPSSGQTRRMSCNELDYDYRHSALQSEALVVLSARFRLQAGVDPSELSARTSSNLHKRTSTQPYQLPSCGSVFRNPEPQKAGRLIEGLGLKGHRIGGAEVSTLHANFIVNTGNAQAADMDALIRHVQAVVKQAHGLQLHPEVMRLGCFANSQAAAA.

An FAD-binding PCMH-type domain is found at 22–190; sequence KVGGAADFFA…LSARFRLQAG (169 aa). Arg169 is a catalytic residue. The Proton donor role is filled by Ser220. Glu290 is an active-site residue.

This sequence belongs to the MurB family. Requires FAD as cofactor.

The protein resides in the cytoplasm. It carries out the reaction UDP-N-acetyl-alpha-D-muramate + NADP(+) = UDP-N-acetyl-3-O-(1-carboxyvinyl)-alpha-D-glucosamine + NADPH + H(+). Its pathway is cell wall biogenesis; peptidoglycan biosynthesis. In terms of biological role, cell wall formation. The chain is UDP-N-acetylenolpyruvoylglucosamine reductase from Synechococcus sp. (strain RCC307).